Reading from the N-terminus, the 117-residue chain is Large ribosomal subunit protein uL24 (117 aa).

This sequence belongs to the universal ribosomal protein uL24 family. In terms of assembly, part of the 50S ribosomal subunit.

Its function is as follows. One of two assembly initiator proteins, it binds directly to the 5'-end of the 23S rRNA, where it nucleates assembly of the 50S subunit. Located at the polypeptide exit tunnel on the outside of the subunit. The chain is Large ribosomal subunit protein uL24 from Methanothermobacter thermautotrophicus (strain ATCC 29096 / DSM 1053 / JCM 10044 / NBRC 100330 / Delta H) (Methanobacterium thermoautotrophicum).